A 1528-amino-acid chain; its full sequence is Mitogen-activated protein kinase kinae kinase MCK1 (1528 aa).

A compositionally biased stretch (low complexity) spans 1 to 11 (MYPGSSQSRPY). Disordered regions lie at residues 1 to 84 (MYPG…PAPR), 109 to 208 (ATAP…VPGI), 303 to 418 (VHAR…NNVR), 449 to 481 (INGR…KLPF), 607 to 652 (VKPP…EARL), 695 to 731 (GKPV…APSA), 746 to 786 (VQGS…SQPM), 811 to 929 (SANN…SDDG), 943 to 1012 (KKAK…EDGK), and 1086 to 1191 (ATPL…ALLR). The span at 12 to 21 (QVPPPPPMSP) shows a compositional bias: pro residues. Residues 22-31 (PLSQMHQQMS) are compositionally biased toward low complexity. Positions 53–64 (APPPPPPGPPPA) are enriched in pro residues. A compositionally biased stretch (low complexity) spans 157 to 173 (SSQTWQTTSSSSTNTAS). 3 stretches are compositionally biased toward polar residues: residues 174–183 (VNDNVQSNAP), 191–205 (NNSA…SSNV), and 318–327 (HGRQGSINSR). Basic and acidic residues predominate over residues 328-337 (GNDKGTHDGS). Polar residues predominate over residues 338–363 (DSPNTPSSQSRSTTIPTFPDGSSFSN). Residues 396–408 (SSTPKSSTLSVSP) are compositionally biased toward low complexity. Positions 409-418 (HSSRFGNNVR) are enriched in polar residues. 2 stretches are compositionally biased toward polar residues: residues 613–622 (SQQSTWSAGD) and 630–641 (GTSSSMSRQQNT). 2 stretches are compositionally biased toward basic and acidic residues: residues 642–652 (LKDDQSEEARL) and 698–714 (VDFD…KNTD). Residues 846 to 860 (RSQTAGDLSPISQMP) show a composition bias toward polar residues. A compositionally biased stretch (acidic residues) spans 917–928 (QSDDDSGDDSDD). The span at 977 to 986 (VSFNSPQSAR) shows a compositional bias: polar residues. Over residues 1001–1012 (PKSDMWDSEDGK) the composition is skewed to basic and acidic residues. The span at 1086–1111 (ATPLNSLPPSRVQSMYNESDTLGSDE) shows a compositional bias: polar residues. Over residues 1142–1152 (SIREKARGAHE) the composition is skewed to basic and acidic residues. A compositionally biased stretch (polar residues) spans 1158-1188 (TQTSMAAPQGLSRSGGTPATETQPTQNNSSA). One can recognise a Protein kinase domain in the interval 1238–1507 (WFKGQLIGKG…NKLLSQHPFC (270 aa)). ATP-binding positions include 1244–1252 (IGKGTYGRV) and lysine 1267.

This sequence belongs to the protein kinase superfamily. STE Ser/Thr protein kinase family. MAP kinase kinase kinase subfamily. In terms of assembly, interacts with the adapter protein MST50 and MIP11.

It catalyses the reaction L-seryl-[protein] + ATP = O-phospho-L-seryl-[protein] + ADP + H(+). The enzyme catalyses L-threonyl-[protein] + ATP = O-phospho-L-threonyl-[protein] + ADP + H(+). Its function is as follows. Mitogen-activated protein kinase kinase kinase; part of the MCK1-MKK2-MPS1 MAP kinase (MAPK) signal transduction cascade that is essential for appressorium formation, penetration and invasive growth. Beside its role in pathogenesis, the MPS1 cascade is active in conidiation and cellular stress responses. Targets downstream of the the MPS1-MAPK pathway include transcription factors MIG1 and SWI6, as well as GSK1 and MPG1. This Pyricularia oryzae (strain 70-15 / ATCC MYA-4617 / FGSC 8958) (Rice blast fungus) protein is Mitogen-activated protein kinase kinae kinase MCK1.